A 140-amino-acid polypeptide reads, in one-letter code: Ribosome maturation factor RimP (140 aa).

The protein belongs to the RimP family.

It localises to the cytoplasm. Required for maturation of 30S ribosomal subunits. This Campylobacter jejuni subsp. jejuni serotype O:6 (strain 81116 / NCTC 11828) protein is Ribosome maturation factor RimP.